The following is a 273-amino-acid chain: Putative phosphoenolpyruvate synthase regulatory protein (273 aa).

153-160 (AVSRAGKT) serves as a coordination point for ADP.

Belongs to the pyruvate, phosphate/water dikinase regulatory protein family. PSRP subfamily.

The enzyme catalyses [pyruvate, water dikinase] + ADP = [pyruvate, water dikinase]-phosphate + AMP + H(+). It catalyses the reaction [pyruvate, water dikinase]-phosphate + phosphate + H(+) = [pyruvate, water dikinase] + diphosphate. Its function is as follows. Bifunctional serine/threonine kinase and phosphorylase involved in the regulation of the phosphoenolpyruvate synthase (PEPS) by catalyzing its phosphorylation/dephosphorylation. This chain is Putative phosphoenolpyruvate synthase regulatory protein, found in Xanthomonas oryzae pv. oryzae (strain MAFF 311018).